The chain runs to 336 residues: Small ribosomal subunit protein RACK1y (336 aa).

WD repeat units follow at residues 15–55 (GHND…TAVA), 74–113 (GHSHFVQDVVLSSDGQFALSGSWDGELRLWDLATGRTTRR), 116–155 (GHTKDVLSVAFSVDNRQIVSAARDNTIKLWNTLGECKYTI), 164–205 (GHTG…LRTK), 208–247 (GHNGYVNAVAVSPDGSLCASGGKDGTTLLWDLTEGKMLYK), 249–287 (DAGAIIHSLCFSPNRYWLCAATEDSVKIWDLESKLVMQD), and 297–336 (SQMLYCTSLSWSADGSTLFAGYTDGTIRVWKVSGFGGYAI).

This sequence belongs to the WD repeat G protein beta family. Ribosomal protein RACK1 subfamily. In terms of assembly, homodimer and heterodimer with RACK1A.

Its function is as follows. Component of the RACK1 regulatory proteins that play a role in multiple signal transduction pathways. The polypeptide is Small ribosomal subunit protein RACK1y (RACK1B) (Oryza sativa subsp. japonica (Rice)).